The primary structure comprises 253 residues: Small ribosomal subunit protein uS3 (253 aa).

In terms of domain architecture, KH type-2 spans 39-107 (VRRALKKRLY…EVHLNIVEIR (69 aa)). The tract at residues 215–253 (LDKRLAGESGPAGEGGGRERGDRPDRGPRRERRGEPSNA) is disordered. Basic and acidic residues predominate over residues 230-253 (GGRERGDRPDRGPRRERRGEPSNA).

This sequence belongs to the universal ribosomal protein uS3 family. In terms of assembly, part of the 30S ribosomal subunit. Forms a tight complex with proteins S10 and S14.

Its function is as follows. Binds the lower part of the 30S subunit head. Binds mRNA in the 70S ribosome, positioning it for translation. The sequence is that of Small ribosomal subunit protein uS3 from Phenylobacterium zucineum (strain HLK1).